A 369-amino-acid chain; its full sequence is MNTQSQTIVVKLGTSVLTGGTLKLDRAHMVELVRQCVHLKKLGHQVIVVTSGAIAAGREHLNYPELPKTMANKQLLAAVGQSCLIQAWQSLFAIYGVNVGQMLLTRADLDDRERYLNARDMLQALLKNGIVPIVNENDAVATNEIKVGDNDNLSALVGILASADKLLLLTDQSGLFTADPRKDPKAELIKEVHTIDETLRKIAGGSGTALGTGGMATKLQAADIARRAGIEVVIAAGSAENVITDVVDSKPQGTKFLPVECALESRKRWILAGPASNGTIVIDDGAVNAVQQKGSSLLSKGISSISGHFVRGGVAKIVNTKGELIARGISRYSSDDLHKILGKHSQDIYAVLGYEYGPVAIHRDDLVLI.

Lysine 11 contributes to the ATP binding site. Substrate is bound by residues serine 51, aspartate 138, and asparagine 150. ATP-binding positions include 170-171 (TD) and 212-218 (TGGMATK). A PUA domain is found at 277-355 (NGTIVIDDGA…QDIYAVLGYE (79 aa)).

The protein belongs to the glutamate 5-kinase family.

The protein localises to the cytoplasm. The enzyme catalyses L-glutamate + ATP = L-glutamyl 5-phosphate + ADP. It functions in the pathway amino-acid biosynthesis; L-proline biosynthesis; L-glutamate 5-semialdehyde from L-glutamate: step 1/2. Catalyzes the transfer of a phosphate group to glutamate to form L-glutamate 5-phosphate. This Aliivibrio salmonicida (strain LFI1238) (Vibrio salmonicida (strain LFI1238)) protein is Glutamate 5-kinase.